The following is a 3658-amino-acid chain: E3 ubiquitin-protein ligase UPL2 (3658 aa).

Over residues 884-893 the composition is skewed to basic and acidic residues; that stretch reads DEKKSVDRAS. The tract at residues 884-914 is disordered; it reads DEKKSVDRASDNSVSASSSTAERESDEDSSN. A compositionally biased stretch (low complexity) spans 894–903; the sequence is DNSVSASSST. The UBA domain maps to 1271-1312; that stretch reads QPDEAIVGMIVEMGFSRSRAEDALRRVGTNSVEMAMDWLFTN. The UIM domain occupies 1318–1337; the sequence is QEDDELAQALALSLGNSSET. Disordered regions lie at residues 1331–1360, 1702–1733, 2004–2038, 2052–2072, 2113–2204, 2293–2313, 2417–2487, 2503–2591, and 2958–2987; these read LGNS…KEPP, VSGS…SKSH, AEQL…VDEL, VDNG…RGSS, HVED…DDMV, PLFS…SAGS, ERET…EGGG, SAQG…PEVN, and SPSS…AESE. The segment covering 1338-1347 has biased composition (basic and acidic residues); the sequence is PKLEDTEKPV. The span at 2007–2027 shows a compositional bias: basic and acidic residues; sequence LKSEVPNEQKNTDSDERHDSH. Over residues 2028 to 2038 the composition is skewed to polar residues; it reads GTSTSTEVDEL. Acidic residues-rich tracts occupy residues 2117-2144 and 2156-2204; these read RADD…DSVE and DVED…DDMV. A compositionally biased stretch (polar residues) spans 2297 to 2313; sequence RPSQTGNTASVSASAGS. Low complexity predominate over residues 2422-2431; that stretch reads TTEVQEQQQP. Polar residues predominate over residues 2503 to 2518; sequence SAQGQSDTSGIQNVSV. Serine 2582 carries the phosphoserine modification. Positions 3317-3658 constitute an HECT domain; the sequence is SPQDLKGRLN…HEANEGFGFA (342 aa). Catalysis depends on cysteine 3625, which acts as the Glycyl thioester intermediate.

It belongs to the UPL family. TOM1/PTR1 subfamily. Widely expressed. Expressed in root, stem, cauline and rosette leaf, seedling and flower (at protein level).

It carries out the reaction S-ubiquitinyl-[E2 ubiquitin-conjugating enzyme]-L-cysteine + [acceptor protein]-L-lysine = [E2 ubiquitin-conjugating enzyme]-L-cysteine + N(6)-ubiquitinyl-[acceptor protein]-L-lysine.. The protein operates within protein modification; protein ubiquitination. Its function is as follows. Probable E3 ubiquitin-protein ligase which mediates ubiquitination and subsequent proteasomal degradation of target proteins. The sequence is that of E3 ubiquitin-protein ligase UPL2 (UPL2) from Arabidopsis thaliana (Mouse-ear cress).